Consider the following 143-residue polypeptide: Small ribosomal subunit protein uS11c (143 aa).

It belongs to the universal ribosomal protein uS11 family. Part of the 30S ribosomal subunit.

Its subcellular location is the plastid. The protein resides in the chloroplast. This Brachypodium distachyon (Purple false brome) protein is Small ribosomal subunit protein uS11c.